We begin with the raw amino-acid sequence, 423 residues long: Tegument protein UL43 (423 aa).

The span at 1-12 shows a compositional bias: polar residues; sequence MEKTPAETTAVS. A disordered region spans residues 1 to 46; the sequence is MEKTPAETTAVSAGNVPRDSIPCITNVSADTRGRTRPSRPATVPQR.

This sequence belongs to the herpesviridae US22 family.

It is found in the virion tegument. The sequence is that of Tegument protein UL43 (UL43) from Homo sapiens (Human).